The following is a 238-amino-acid chain: Ribonuclease PH (238 aa).

Residues arginine 87 and 125–127 each bind phosphate; that span reads GTR.

Belongs to the RNase PH family. As to quaternary structure, homohexameric ring arranged as a trimer of dimers.

The enzyme catalyses tRNA(n+1) + phosphate = tRNA(n) + a ribonucleoside 5'-diphosphate. Its function is as follows. Phosphorolytic 3'-5' exoribonuclease that plays an important role in tRNA 3'-end maturation. Removes nucleotide residues following the 3'-CCA terminus of tRNAs; can also add nucleotides to the ends of RNA molecules by using nucleoside diphosphates as substrates, but this may not be physiologically important. Probably plays a role in initiation of 16S rRNA degradation (leading to ribosome degradation) during starvation. The chain is Ribonuclease PH from Synechococcus elongatus (strain ATCC 33912 / PCC 7942 / FACHB-805) (Anacystis nidulans R2).